Here is a 214-residue protein sequence, read N- to C-terminus: uncharacterized protein (214 aa).

This is an uncharacterized protein from Sinorhizobium fredii (strain NBRC 101917 / NGR234).